The primary structure comprises 555 residues: Urocanate hydratase (555 aa).

Residues 52 to 53, glutamine 130, 176 to 178, glutamate 196, arginine 201, 242 to 243, 263 to 267, 273 to 274, and tyrosine 322 each bind NAD(+); these read GG, GMG, NA, QTSAH, and YL. The active site involves cysteine 410. NAD(+) is bound at residue glycine 492.

The protein belongs to the urocanase family. Requires NAD(+) as cofactor.

The protein localises to the cytoplasm. The enzyme catalyses 4-imidazolone-5-propanoate = trans-urocanate + H2O. It functions in the pathway amino-acid degradation; L-histidine degradation into L-glutamate; N-formimidoyl-L-glutamate from L-histidine: step 2/3. In terms of biological role, catalyzes the conversion of urocanate to 4-imidazolone-5-propionate. In Shewanella baltica (strain OS195), this protein is Urocanate hydratase.